A 343-amino-acid chain; its full sequence is Anthranilate phosphoribosyltransferase (343 aa).

5-phospho-alpha-D-ribose 1-diphosphate-binding positions include Gly86, 89–90 (GD), Thr94, 96–99 (NIST), 114–122 (KHGNKSASG), and Ser126. An anthranilate-binding site is contributed by Gly86. Position 98 (Ser98) interacts with Mg(2+). Anthranilate is bound at residue Asn117. Residue Arg172 coordinates anthranilate. Mg(2+)-binding residues include Asp231 and Glu232.

Belongs to the anthranilate phosphoribosyltransferase family. Homodimer. Mg(2+) is required as a cofactor.

The enzyme catalyses N-(5-phospho-beta-D-ribosyl)anthranilate + diphosphate = 5-phospho-alpha-D-ribose 1-diphosphate + anthranilate. It functions in the pathway amino-acid biosynthesis; L-tryptophan biosynthesis; L-tryptophan from chorismate: step 2/5. Its function is as follows. Catalyzes the transfer of the phosphoribosyl group of 5-phosphorylribose-1-pyrophosphate (PRPP) to anthranilate to yield N-(5'-phosphoribosyl)-anthranilate (PRA). This chain is Anthranilate phosphoribosyltransferase, found in Prochlorococcus marinus subsp. pastoris (strain CCMP1986 / NIES-2087 / MED4).